The primary structure comprises 275 residues: Penicillin-insensitive murein endopeptidase (275 aa).

Positions methionine 1–alanine 19 are cleaved as a signal peptide. Cystine bridges form between cysteine 44–cysteine 264, cysteine 187–cysteine 235, and cysteine 216–cysteine 223. Histidine 110, histidine 113, aspartate 120, aspartate 147, and histidine 211 together coordinate Zn(2+). A disordered region spans residues glycine 234 to proline 262.

It belongs to the peptidase M74 family. As to quaternary structure, dimer. The cofactor is Zn(2+).

The protein localises to the periplasm. In terms of biological role, murein endopeptidase that cleaves the D-alanyl-meso-2,6-diamino-pimelyl amide bond that connects peptidoglycan strands. Likely plays a role in the removal of murein from the sacculus. The chain is Penicillin-insensitive murein endopeptidase from Yersinia enterocolitica serotype O:8 / biotype 1B (strain NCTC 13174 / 8081).